Here is a 130-residue protein sequence, read N- to C-terminus: Small ribosomal subunit protein uS9 (130 aa).

The segment at 102-130 (GLLTRDSRMKERKKPGLKGARRAPQFSKR) is disordered. A compositionally biased stretch (basic residues) spans 111-130 (KERKKPGLKGARRAPQFSKR).

Belongs to the universal ribosomal protein uS9 family.

This is Small ribosomal subunit protein uS9 from Listeria monocytogenes serovar 1/2a (strain ATCC BAA-679 / EGD-e).